A 331-amino-acid chain; its full sequence is Putative type II secretion system C-type protein YghF (331 aa).

Residues 44–60 traverse the membrane as a helical segment; it reads MFWLMLLIISAKMAHSL.

The protein belongs to the GSP C family.

The protein resides in the cell inner membrane. Its function is as follows. Involved in a type II secretion system (T2SS, formerly general secretion pathway, GSP) for the export of folded proteins across the outer membrane. The polypeptide is Putative type II secretion system C-type protein YghF (Escherichia coli (strain K12)).